The primary structure comprises 443 residues: Cyclin-A2-1 (443 aa).

Positions Met1–Asn10 are enriched in basic residues. Residues Met1–Arg61 are disordered. Residues Ala11–Asn25 are compositionally biased toward basic and acidic residues.

Belongs to the cyclin family. Cyclin AB subfamily. In terms of tissue distribution, expressed in tissues with active cell division: apical root and shoot meristems, lateral root and leaf primordia, floral meristems and developing pollen.

May negatively regulate endocycles and act as a regulator of ploidy levels in endoreduplication. In Arabidopsis thaliana (Mouse-ear cress), this protein is Cyclin-A2-1 (CYCA2-1).